The following is an 85-amino-acid chain: Large ribosomal subunit protein bL27 (85 aa).

The segment at 1–21 is disordered; the sequence is MAHKKAGGSSRNGRDSEGRRL.

It belongs to the bacterial ribosomal protein bL27 family.

This is Large ribosomal subunit protein bL27 from Rhodospirillum rubrum (strain ATCC 11170 / ATH 1.1.1 / DSM 467 / LMG 4362 / NCIMB 8255 / S1).